Reading from the N-terminus, the 447-residue chain is Alpha-1,6-mannosyl-glycoprotein 2-beta-N-acetylglucosaminyltransferase (447 aa).

Residues 1–9 (MRFRIYKRK) are Cytoplasmic-facing. The chain crosses the membrane as a helical; Signal-anchor for type II membrane protein span at residues 10-29 (VLILTLVVAACGFVLWSSNG). Residues 30–447 (RQRKNEALAP…ELCKSYRRLQ (418 aa)) lie on the Lumenal side of the membrane. N-linked (GlcNAc...) asparagine glycans are attached at residues Asn69 and Asn86. Substrate is bound by residues 123-127 (QVHNR) and Asp154. Residues Cys196 and Cys210 are joined by a disulfide bond. 229 to 233 (QTKHH) contributes to the substrate binding site. A Mn(2+)-binding site is contributed by Asp261. A disulfide bridge connects residues Cys283 and Cys286. Arg298 is a substrate binding site. 3 disulfides stabilise this stretch: Cys334/Cys357, Cys339/Cys440, and Cys378/Cys386. His374 provides a ligand contact to Mn(2+).

The protein belongs to the glycosyltransferase 16 (GT16) protein family. Homodimer. Mn(2+) serves as cofactor.

The protein resides in the golgi apparatus membrane. The catalysed reaction is an N(4)-{beta-D-GlcNAc-(1-&gt;2)-alpha-D-Man-(1-&gt;3)-[alpha-D-Man-(1-&gt;6)]-beta-D-Man-(1-&gt;4)-beta-D-GlcNAc-(1-&gt;4)-beta-D-GlcNAc}-L-asparaginyl-[protein] + UDP-N-acetyl-alpha-D-glucosamine = N(4)-{beta-D-GlcNAc-(1-&gt;2)-alpha-D-Man-(1-&gt;3)-[beta-D-GlcNAc-(1-&gt;2)-alpha-D-Man-(1-&gt;6)]-beta-D-Man-(1-&gt;4)-beta-D-GlcNAc-(1-&gt;4)-beta-D-GlcNAc}-L-asparaginyl-[protein] + UDP + H(+). It functions in the pathway protein modification; protein glycosylation. Plays an essential role in protein N-glycosylation. Catalyzes the transfer of N-acetylglucosamine (GlcNAc) onto the free terminal mannose moiety in the core structure of the nascent N-linked glycan chain, giving rise to the second branch in complex glycans. This is Alpha-1,6-mannosyl-glycoprotein 2-beta-N-acetylglucosaminyltransferase (MGAT2) from Homo sapiens (Human).